The primary structure comprises 424 residues: 3-phosphoshikimate 1-carboxyvinyltransferase (424 aa).

Residues lysine 21, serine 22, and arginine 26 each contribute to the 3-phosphoshikimate site. Phosphoenolpyruvate is bound at residue lysine 21. Residues glycine 92 and arginine 120 each coordinate phosphoenolpyruvate. Residues serine 163, serine 164, glutamine 165, serine 191, aspartate 306, and lysine 333 each coordinate 3-phosphoshikimate. Glutamine 165 is a phosphoenolpyruvate binding site. The Proton acceptor role is filled by aspartate 306. Phosphoenolpyruvate-binding residues include arginine 337, arginine 379, and lysine 405.

This sequence belongs to the EPSP synthase family. Monomer.

The protein resides in the cytoplasm. The enzyme catalyses 3-phosphoshikimate + phosphoenolpyruvate = 5-O-(1-carboxyvinyl)-3-phosphoshikimate + phosphate. Its pathway is metabolic intermediate biosynthesis; chorismate biosynthesis; chorismate from D-erythrose 4-phosphate and phosphoenolpyruvate: step 6/7. Catalyzes the transfer of the enolpyruvyl moiety of phosphoenolpyruvate (PEP) to the 5-hydroxyl of shikimate-3-phosphate (S3P) to produce enolpyruvyl shikimate-3-phosphate and inorganic phosphate. This is 3-phosphoshikimate 1-carboxyvinyltransferase from Clostridium perfringens (strain SM101 / Type A).